The primary structure comprises 353 residues: UDP-3-O-acylglucosamine N-acyltransferase (353 aa).

Residue H246 is the Proton acceptor of the active site.

This sequence belongs to the transferase hexapeptide repeat family. LpxD subfamily. Homotrimer.

It carries out the reaction a UDP-3-O-[(3R)-3-hydroxyacyl]-alpha-D-glucosamine + a (3R)-hydroxyacyl-[ACP] = a UDP-2-N,3-O-bis[(3R)-3-hydroxyacyl]-alpha-D-glucosamine + holo-[ACP] + H(+). The protein operates within bacterial outer membrane biogenesis; LPS lipid A biosynthesis. Functionally, catalyzes the N-acylation of UDP-3-O-acylglucosamine using 3-hydroxyacyl-ACP as the acyl donor. Is involved in the biosynthesis of lipid A, a phosphorylated glycolipid that anchors the lipopolysaccharide to the outer membrane of the cell. The sequence is that of UDP-3-O-acylglucosamine N-acyltransferase from Chlorobaculum tepidum (strain ATCC 49652 / DSM 12025 / NBRC 103806 / TLS) (Chlorobium tepidum).